The following is a 548-amino-acid chain: MSASYVSDLHINVKGVPFHLCKEMLAKRSSKVSSLLERNEIDELRLILRDLEVDPETFELVARFCNGSEFKFTSDTIVSVLCIAYYLGMNEEQSSNNLLGKASEFLEHRVFPSWSETINALRSGDKSFDKLADVGLVDVFFDSLIEKASYDPRLLGELIKNRAETDDYRPNPRRRLFVIDWKSEDLITIPLRLYEPFMIRAIKSRSIPVEYIVLSVCKYAKKWVFDTEESLSGQKREAIEVVERLLPYQRGLISCELLFESLKHSIWLEASSECQNGFMIRICKQLDMAKSTDLKILSRGYGEKAEGFENIELVKTVVKSFYTYYANEDSETVSHFVKVAKLSEEFLFLAASEASLKLEAFVELAEMTVAVSQGILSYSDGIYRAIDVFLESHRYLTESEKMEVCKVLECGKLSQEGFERAAKNQKLPLRIVVNVLCVSQLQIRDTVAKEIKGMEEKVDEEEEEEIEVSSDEDEMEKMSNKLLGLEIENDECVVHRRKNMKKKKKKISVWGQVKRKFGCLNSSSSSYSVDACTCDVKKKKKKIHHHYE.

The region spanning Ser-7–Ser-74 is the BTB domain. The region spanning Asp-180–Gln-442 is the NPH3 domain. Tyr-383 carries the post-translational modification Phosphotyrosine. Residues Gln-442–Val-493 adopt a coiled-coil conformation.

Belongs to the NPH3 family.

It functions in the pathway protein modification; protein ubiquitination. In terms of biological role, may act as a substrate-specific adapter of an E3 ubiquitin-protein ligase complex (CUL3-RBX1-BTB) which mediates the ubiquitination and subsequent proteasomal degradation of target proteins. This chain is BTB/POZ domain-containing protein At5g17580, found in Arabidopsis thaliana (Mouse-ear cress).